Reading from the N-terminus, the 189-residue chain is uncharacterized protein (189 aa).

The next 4 membrane-spanning stretches (helical) occupy residues leucine 49–phenylalanine 69, leucine 78–phenylalanine 98, leucine 102–isoleucine 122, and valine 124–alanine 144. Residues serine 165–alanine 189 form a disordered region.

This sequence belongs to the chlamydial CPn_0442/CT_006/TC_0274 family.

The protein localises to the cell membrane. This is an uncharacterized protein from Chlamydia trachomatis serovar D (strain ATCC VR-885 / DSM 19411 / UW-3/Cx).